The sequence spans 248 residues: DNA polymerase sliding clamp (248 aa).

The protein belongs to the PCNA family. As to quaternary structure, homotrimer. The subunits circularize to form a toroid; DNA passes through its center. Replication factor C (RFC) is required to load the toroid on the DNA.

Sliding clamp subunit that acts as a moving platform for DNA processing. Responsible for tethering the catalytic subunit of DNA polymerase and other proteins to DNA during high-speed replication. This chain is DNA polymerase sliding clamp, found in Cenarchaeum symbiosum (strain A).